A 257-amino-acid polypeptide reads, in one-letter code: MVDAFGLWELNFPCSRVDDDDDEEEQITKEQEEQLCPQFVFSPQFSKDVGKTEPIECSVLVLGVGEVASTFLEVHFLCGNNSSVAAVISDKKTEKNFEYLVKNLRNKRSSLLHQLTRNNDVMVCQISSHVEQDKGFYWTQKIFSHIRPAKVVILTSSPASEYNSDDPSEIKTDFVKMMKTNAWSNSCAGPDITDIQTPNTVKGLAASVLTHCQIYKLPAALFMCYTESMHVDAQAVEAFRCKAPYKQSSMGLESGKL.

This sequence belongs to the PSMG1 family. As to quaternary structure, forms a heterodimer with psmg2.

Chaperone protein which promotes assembly of the 20S proteasome as part of a heterodimer with psmg2. In Nematostella vectensis (Starlet sea anemone), this protein is Proteasome assembly chaperone 1 (psmg1).